Reading from the N-terminus, the 225-residue chain is Deoxyribose-phosphate aldolase (225 aa).

The Proton donor/acceptor role is filled by D96. K157 acts as the Schiff-base intermediate with acetaldehyde in catalysis. The Proton donor/acceptor role is filled by K185.

It belongs to the DeoC/FbaB aldolase family. DeoC type 1 subfamily.

The protein localises to the cytoplasm. The enzyme catalyses 2-deoxy-D-ribose 5-phosphate = D-glyceraldehyde 3-phosphate + acetaldehyde. It participates in carbohydrate degradation; 2-deoxy-D-ribose 1-phosphate degradation; D-glyceraldehyde 3-phosphate and acetaldehyde from 2-deoxy-alpha-D-ribose 1-phosphate: step 2/2. In terms of biological role, catalyzes a reversible aldol reaction between acetaldehyde and D-glyceraldehyde 3-phosphate to generate 2-deoxy-D-ribose 5-phosphate. This is Deoxyribose-phosphate aldolase from Microcystis aeruginosa (strain NIES-843 / IAM M-2473).